Here is a 591-residue protein sequence, read N- to C-terminus: Proteasome-associated ATPase (591 aa).

Positions 8-77 (DSVAAARELE…LREEVDRLGQ (70 aa)) form a coiled coil. Residue 278–283 (GCGKTL) coordinates ATP. The tract at residues 590–591 (YL) is docks into pockets in the proteasome alpha-ring.

It belongs to the AAA ATPase family. Homohexamer. Assembles into a hexameric ring structure that caps the 20S proteasome core. Strongly interacts with the prokaryotic ubiquitin-like protein Pup through a hydrophobic interface; the interacting region of ARC lies in its N-terminal coiled-coil domain. There is one Pup binding site per ARC hexamer ring. Upon ATP-binding, the C-terminus of ARC interacts with the alpha-rings of the proteasome core, possibly by binding to the intersubunit pockets.

It participates in protein degradation; proteasomal Pup-dependent pathway. Its function is as follows. ATPase which is responsible for recognizing, binding, unfolding and translocation of pupylated proteins into the bacterial 20S proteasome core particle. May be essential for opening the gate of the 20S proteasome via an interaction with its C-terminus, thereby allowing substrate entry and access to the site of proteolysis. Thus, the C-termini of the proteasomal ATPase may function like a 'key in a lock' to induce gate opening and therefore regulate proteolysis. The polypeptide is Proteasome-associated ATPase (Rhodococcus jostii (strain RHA1)).